Consider the following 420-residue polypeptide: Annetocin receptor (420 aa).

The Extracellular segment spans residues methionine 1–glutamine 54. Asparagine 22 is a glycosylation site (N-linked (GlcNAc...) asparagine). Residues serine 55 to leucine 75 traverse the membrane as a helical segment. Residues serine 76–arginine 83 lie on the Cytoplasmic side of the membrane. The helical transmembrane segment at methionine 84–leucine 104 threads the bilayer. The Extracellular segment spans residues proline 105–leucine 124. Cysteines 122 and 201 form a disulfide. The helical transmembrane segment at valine 125–valine 145 threads the bilayer. Residues aspartate 146–histidine 166 are Cytoplasmic-facing. The helical transmembrane segment at tyrosine 167–phenylalanine 187 threads the bilayer. Residues aspartate 188–proline 212 lie on the Extracellular side of the membrane. Residues valine 213 to isoleucine 233 form a helical membrane-spanning segment. The Cytoplasmic portion of the chain corresponds to tyrosine 234 to threonine 328. Residues valine 329 to tryptophan 349 form a helical membrane-spanning segment. Residues aspartate 350–methionine 360 are Extracellular-facing. The chain crosses the membrane as a helical span at residues valine 361–phenylalanine 381. Over serine 382–serine 420 the chain is Cytoplasmic. The segment at tryptophan 397–serine 420 is disordered. Polar residues predominate over residues glutamine 399–serine 420.

This sequence belongs to the G-protein coupled receptor 1 family. Vasopressin/oxytocin receptor subfamily. In terms of tissue distribution, nephridia in clitellum region.

It localises to the cell membrane. Its function is as follows. Receptor for annetocin. Activation by annetocin may induce egg-laying behavior through calcium-dependent signaling. The protein is Annetocin receptor of Eisenia fetida (Red wiggler worm).